The sequence spans 256 residues: uncharacterized protein (256 aa).

6 helical membrane passes run 6–26 (TSFI…VSFL), 29–49 (LALV…GTFI), 61–81 (ISGT…GLYF), 145–165 (IIGC…TGIA), 175–195 (YYFK…IWLI), and 218–238 (IGWL…AIQF).

The protein belongs to the DedA family.

Its subcellular location is the cell membrane. This is an uncharacterized protein from Buchnera aphidicola subsp. Acyrthosiphon pisum (strain APS) (Acyrthosiphon pisum symbiotic bacterium).